The primary structure comprises 464 residues: Argininosuccinate lyase (464 aa).

The protein belongs to the lyase 1 family. Argininosuccinate lyase subfamily.

It is found in the cytoplasm. The enzyme catalyses 2-(N(omega)-L-arginino)succinate = fumarate + L-arginine. It participates in amino-acid biosynthesis; L-arginine biosynthesis; L-arginine from L-ornithine and carbamoyl phosphate: step 3/3. This is Argininosuccinate lyase from Sulfurovum sp. (strain NBC37-1).